The sequence spans 82 residues: Small ribosomal subunit protein uS17 (82 aa).

The protein belongs to the universal ribosomal protein uS17 family. In terms of assembly, part of the 30S ribosomal subunit.

In terms of biological role, one of the primary rRNA binding proteins, it binds specifically to the 5'-end of 16S ribosomal RNA. In Shewanella sp. (strain MR-7), this protein is Small ribosomal subunit protein uS17.